Reading from the N-terminus, the 265-residue chain is F-box only protein 6 (265 aa).

The 48-residue stretch at 3-50 (LVSINQLPENILLEVFMHVPARQLLRNCRPVCCLWRDLIDLVSLWKRK) folds into the F-box domain. Residues 71-252 (FYFLCSLRRN…VTNSSVVISH (182 aa)) enclose the FBA domain. A Phosphoserine modification is found at Ser251.

As to quaternary structure, part of a SCF (SKP1-cullin-F-box) protein ligase complex. Interacts with VCP, CHEK1 and CUL1.

It is found in the cytoplasm. It participates in protein modification; protein ubiquitination. Its function is as follows. Substrate-recognition component of some SCF (SKP1-CUL1-F-box protein)-type E3 ubiquitin ligase complexes. Involved in endoplasmic reticulum-associated degradation pathway (ERAD) for misfolded lumenal proteins by recognizing and binding sugar chains on unfolded glycoproteins that are retrotranslocated into the cytosol and promoting their ubiquitination and subsequent degradation. Able to recognize and bind denatured glycoproteins, which are modified with not only high-mannose but also complex-type oligosaccharides. Also recognizes sulfated glycans. Also involved in DNA damage response by specifically recognizing activated CHEK1 (phosphorylated on 'Ser-345'), promoting its ubiquitination and degradation. Ubiquitination of CHEK1 is required to ensure that activated CHEK1 does not accumulate as cells progress through S phase, or when replication forks encounter transient impediments during normal DNA replication. This chain is F-box only protein 6 (FBXO6), found in Bos taurus (Bovine).